The sequence spans 125 residues: UPF0102 protein ABO_0585 (125 aa).

This sequence belongs to the UPF0102 family.

In Alcanivorax borkumensis (strain ATCC 700651 / DSM 11573 / NCIMB 13689 / SK2), this protein is UPF0102 protein ABO_0585.